The sequence spans 552 residues: Hydroxylamine reductase (552 aa).

Residues Cys-5, Cys-8, Cys-20, and Cys-27 each coordinate [2Fe-2S] cluster. Hybrid [4Fe-2O-2S] cluster is bound by residues His-251, Glu-275, Cys-319, Cys-407, Cys-435, Cys-460, Glu-494, and Lys-496. Cys-407 carries the post-translational modification Cysteine persulfide.

The protein belongs to the HCP family. It depends on [2Fe-2S] cluster as a cofactor. Requires hybrid [4Fe-2O-2S] cluster as cofactor.

It is found in the cytoplasm. It carries out the reaction A + NH4(+) + H2O = hydroxylamine + AH2 + H(+). Functionally, catalyzes the reduction of hydroxylamine to form NH(3) and H(2)O. The protein is Hydroxylamine reductase of Escherichia coli (strain UTI89 / UPEC).